Consider the following 311-residue polypeptide: CD-NTase-associated protein 12 (311 aa).

The region spanning 4–121 is the TIR domain; sequence RIFIGSSKEG…LLGITVPQFE (118 aa). An STING domain region spans residues 157–311; that stretch reads STVLAIGYFY…RNIVKIIQEE (155 aa). Positions 168, 232, and 249 each coordinate 3',3'-c-di-GMP.

The protein in the C-terminal section; belongs to the bacterial STING family. Forms homodimers; in the presence of c-di-GMP forms filaments with an ordered array of parallel-stacked subunits.

It carries out the reaction NAD(+) + H2O = ADP-D-ribose + nicotinamide + H(+). With respect to regulation, NAD(+) hydrolase activity is strongly stimulated by c-di-GMP, weakly by 3'3'-cGAMP, very weakly by c-di-AMP but not at all by 2'3'-cGAMP. Self-association of TIR domains is required for NADase activity. Its function is as follows. Effector protein of a CBASS antiviral system with NAD(+) hydrolase activity. CBASS (cyclic oligonucleotide-based antiphage signaling system) provides immunity against bacteriophage. The CD-NTase protein synthesizes cyclic nucleotides in response to infection; these serve as specific second messenger signals. The signals activate a diverse range of effectors, leading to bacterial cell death and thus abortive phage infection. A type I-D CBASS(GG) system. In terms of biological role, binds c-di-GMP, does not bind cUMP-AMP. Upon activation by c-di-GMP forms filaments which hydrolyze NAD(+); filament formation is required for enzyme activation. This Flavobacterium daejeonense protein is CD-NTase-associated protein 12.